A 163-amino-acid polypeptide reads, in one-letter code: NADH-quinone oxidoreductase subunit I (163 aa).

2 4Fe-4S ferredoxin-type domains span residues 54–84 and 94–123; these read LRRY…IESD and TRYD…ETHI. The [4Fe-4S] cluster site is built by Cys-64, Cys-67, Cys-70, Cys-74, Cys-103, Cys-106, Cys-109, and Cys-113.

Belongs to the complex I 23 kDa subunit family. NDH-1 is composed of 14 different subunits. Subunits NuoA, H, J, K, L, M, N constitute the membrane sector of the complex. [4Fe-4S] cluster is required as a cofactor.

It localises to the cell inner membrane. The enzyme catalyses a quinone + NADH + 5 H(+)(in) = a quinol + NAD(+) + 4 H(+)(out). NDH-1 shuttles electrons from NADH, via FMN and iron-sulfur (Fe-S) centers, to quinones in the respiratory chain. The immediate electron acceptor for the enzyme in this species is believed to be ubiquinone. Couples the redox reaction to proton translocation (for every two electrons transferred, four hydrogen ions are translocated across the cytoplasmic membrane), and thus conserves the redox energy in a proton gradient. This Cupriavidus metallidurans (strain ATCC 43123 / DSM 2839 / NBRC 102507 / CH34) (Ralstonia metallidurans) protein is NADH-quinone oxidoreductase subunit I.